We begin with the raw amino-acid sequence, 712 residues long: Sesterterpene synthase btcA (712 aa).

The terpene cyclase stretch occupies residues 1–332; the sequence is MTTIWEHCVD…CANCPRHHAW (332 aa). Position 96 (D96) interacts with Mg(2+). Residues D96, N234, 238 to 242, and 328 to 329 each bind substrate; these read SWDRE and RH. Residues 96 to 100 carry the DDXXD 1 motif; it reads DDLCD. Residues 234-242 carry the NSE/DTE motif; the sequence is NDYWSWDRE. The segment at 333–706 is prenyltransferase; that stretch reads RDEESSPSER…VMRIVLSRLS (374 aa). The tract at residues 334 to 373 is disordered; sequence DEESSPSERSFSPSNEGIEDPRLSPGASTTSSMSQKSSPA. Low complexity-rich tracts occupy residues 340-349 and 361-373; these read SERSFSPSNE and STTS…SSPA. Isopentenyl diphosphate contacts are provided by K414, R417, and H446. Positions 453 and 457 each coordinate Mg(2+). The short motif at 453 to 457 is the DDXXD 2 element; it reads DDIED. R462 provides a ligand contact to dimethylallyl diphosphate. Isopentenyl diphosphate is bound at residue R463. Dimethylallyl diphosphate-binding residues include K540, T541, Q580, N587, K597, and K607.

It in the N-terminal section; belongs to the terpene synthase family. In the C-terminal section; belongs to the FPP/GGPP synthase family. In terms of assembly, hexamer. Mg(2+) serves as cofactor.

The catalysed reaction is isopentenyl diphosphate + (2E,6E)-farnesyl diphosphate = (2E,6E,10E)-geranylgeranyl diphosphate + diphosphate. It carries out the reaction isopentenyl diphosphate + (2E,6E,10E)-geranylgeranyl diphosphate = (2E,6E,10E,14E)-geranylfarnesyl diphosphate + diphosphate. The protein operates within secondary metabolite biosynthesis; terpenoid biosynthesis. In terms of biological role, bifunctional terpene synthase; part of the gene cluster that mediates the biosynthesis of betaestacins. The bifunctional terpene synthase btcA converts isopentenyl diphosphate (IPP) and dimethylallyl diphosphate (DMAPP) into the sesterterpene betaestacin I. The C-terminal prenyltransferase (PT) domain of btcA catalyzes formation of GFPP, whereas the N-terminal terpene cyclase (TC) domain catalyzes the cyclization of GFPP into betaestacin I. The cytochrome P450 monooxygenase btcB oxidizes the C25 methyl group of betaestacin I to yield the carboxylic acid betaestacin IV via the alcohol betaestacin III. The cytochrome P450 monooxygenase btcC further catalyzes the multistep oxidation of betaestacin IV to produce several compounds, including betaestacins Va, Vb, Vc and VI. The polypeptide is Sesterterpene synthase btcA (Colletotrichum orbiculare (strain 104-T / ATCC 96160 / CBS 514.97 / LARS 414 / MAFF 240422) (Cucumber anthracnose fungus)).